Here is a 347-residue protein sequence, read N- to C-terminus: NADH-ubiquinone oxidoreductase chain 2 (347 aa).

11 helical membrane-spanning segments follow: residues 3–23, 25–45, 59–79, 96–116, 127–147, 148–168, 178–198, 201–221, 247–267, 276–296, and 325–345; these read PLIMSIILATIILGTTIVMTG, HWLMIWIGFEMNMLAIIPMLM, YFFTQATASMLLMLAGIINLM, IIMTLALAMKLGLAPFHFWVP, GLILLTWQKLASMTGLYMISP, GINLNMLMTMSMLSIAIGGWG, IMAYSSIAHMGWMTAILIYNP, TLLNLVIYILMTTTMFMLFMI, TLLSMGGLPPLMGFLPKWMII, IVLPTIMAITALLNLFFYMRL, and LLTPMIMMSTLTLPLAPMMMI.

This sequence belongs to the complex I subunit 2 family. Core subunit of respiratory chain NADH dehydrogenase (Complex I) which is composed of 45 different subunits. Interacts with TMEM242.

It localises to the mitochondrion inner membrane. The enzyme catalyses a ubiquinone + NADH + 5 H(+)(in) = a ubiquinol + NAD(+) + 4 H(+)(out). Functionally, core subunit of the mitochondrial membrane respiratory chain NADH dehydrogenase (Complex I) which catalyzes electron transfer from NADH through the respiratory chain, using ubiquinone as an electron acceptor. Essential for the catalytic activity and assembly of complex I. This is NADH-ubiquinone oxidoreductase chain 2 from Ozimops beccarii (Beccari's free-tailed bat).